The sequence spans 268 residues: Interleukin-1 beta (268 aa).

A propeptide spanning residues 1–116 (MATVPELTSE…TWDDYSLECD (116 aa)) is cleaved from the precursor.

This sequence belongs to the IL-1 family. As to quaternary structure, monomer. In its precursor form, weakly interacts with full-length MEFV; the mature cytokine does not interact at all. Interacts with integrins ITGAV:ITGBV and ITGA5:ITGB1; integrin-binding is required for IL1B signaling. Interacts with cargo receptor TMED10; the interaction is direct and is required for the secretion of IL1B mature form. Interacts with HSP90AB1; the interaction facilitates cargo translocation into the ERGIC. Interacts with HSP90B1; the interaction facilitates cargo translocation into the ERGIC.

The protein localises to the cytoplasm. It localises to the cytosol. Its subcellular location is the secreted. The protein resides in the lysosome. It is found in the extracellular exosome. Functionally, potent pro-inflammatory cytokine. Initially discovered as the major endogenous pyrogen, induces prostaglandin synthesis, neutrophil influx and activation, T-cell activation and cytokine production, B-cell activation and antibody production, and fibroblast proliferation and collagen production. Promotes Th17 differentiation of T-cells. Synergizes with IL12/interleukin-12 to induce IFNG synthesis from T-helper 1 (Th1) cells. Plays a role in angiogenesis by inducing VEGF production synergistically with TNF and IL6. Involved in transduction of inflammation downstream of pyroptosis: its mature form is specifically released in the extracellular milieu by passing through the gasdermin-D (GSDMD) pore. This Oryctolagus cuniculus (Rabbit) protein is Interleukin-1 beta (IL1B).